Here is a 285-residue protein sequence, read N- to C-terminus: tRNA-cytidine(32) 2-sulfurtransferase (285 aa).

The short motif at Ser49–Ser54 is the PP-loop motif element. Residues Cys124, Cys127, and Cys215 each coordinate [4Fe-4S] cluster.

Belongs to the TtcA family. In terms of assembly, homodimer. Mg(2+) serves as cofactor. Requires [4Fe-4S] cluster as cofactor.

It is found in the cytoplasm. The catalysed reaction is cytidine(32) in tRNA + S-sulfanyl-L-cysteinyl-[cysteine desulfurase] + AH2 + ATP = 2-thiocytidine(32) in tRNA + L-cysteinyl-[cysteine desulfurase] + A + AMP + diphosphate + H(+). It functions in the pathway tRNA modification. Catalyzes the ATP-dependent 2-thiolation of cytidine in position 32 of tRNA, to form 2-thiocytidine (s(2)C32). The sulfur atoms are provided by the cysteine/cysteine desulfurase (IscS) system. In Hahella chejuensis (strain KCTC 2396), this protein is tRNA-cytidine(32) 2-sulfurtransferase.